The sequence spans 806 residues: Acetyl-CoA decarbonylase/synthase complex subunit alpha 1 (806 aa).

Residues cysteine 73, cysteine 76, cysteine 77, cysteine 79, cysteine 84, and cysteine 94 each coordinate [4Fe-4S] cluster. Position 117 (histidine 117) interacts with CO. Residues histidine 250, cysteine 278, and cysteine 323 each contribute to the [Ni-4Fe-4S] cluster site. 2 consecutive 4Fe-4S ferredoxin-type domains span residues 407 to 436 (DEEF…IPEA) and 446 to 475 (SYLD…LNII). [4Fe-4S] cluster-binding residues include cysteine 417, cysteine 420, cysteine 423, cysteine 427, cysteine 455, cysteine 458, cysteine 461, and cysteine 465. Residues cysteine 523, cysteine 552, and cysteine 587 each contribute to the [Ni-4Fe-4S] cluster site.

The protein belongs to the Ni-containing carbon monoxide dehydrogenase family. Heterotetramer of two alpha and two epsilon subunits. The ACDS complex is made up of alpha, epsilon, beta, gamma and delta subunits with a probable stoichiometry of (alpha(2)epsilon(2))(4)-beta(8)-(gamma(1)delta(1))(8). The cofactor is [4Fe-4S] cluster. [Ni-4Fe-4S] cluster is required as a cofactor.

The catalysed reaction is CO + 2 oxidized [2Fe-2S]-[ferredoxin] + H2O = 2 reduced [2Fe-2S]-[ferredoxin] + CO2 + 2 H(+). It participates in one-carbon metabolism; methanogenesis from acetate. Carbon monoxide dehydrogenase activity is inhibited by KCN and is rapidly inactivated by O(2). Functionally, part of the ACDS complex that catalyzes the reversible cleavage of acetyl-CoA, allowing growth on acetate as sole source of carbon and energy. The alpha-epsilon subcomponent functions as a carbon monoxide dehydrogenase. The protein is Acetyl-CoA decarbonylase/synthase complex subunit alpha 1 of Methanosarcina barkeri (strain Fusaro / DSM 804).